The chain runs to 479 residues: GTPase Obg (479 aa).

The 158-residue stretch at 2-159 (PRFVDRVVIH…RDLTLELKTV (158 aa)) folds into the Obg domain. The 181-residue stretch at 160–340 (ADVGLVGFPS…LIFGLSQMIS (181 aa)) folds into the OBG-type G domain. GTP contacts are provided by residues 166-173 (GFPSAGKS), 191-195 (FTTLV), 212-215 (DVPG), 292-295 (NKID), and 321-323 (STA). Mg(2+)-binding residues include serine 173 and threonine 193. The 79-residue stretch at 358 to 436 (PIPVDDSGFT…IGEMTFDWEP (79 aa)) folds into the OCT domain. The disordered stretch occupies residues 434–479 (WEPQTPAGEPVAMSGRGTDPRLDSNKRVGAAERKAARSRRREHGDG). Residues 451–468 (TDPRLDSNKRVGAAERKA) show a composition bias toward basic and acidic residues. Residues 469–479 (ARSRRREHGDG) are compositionally biased toward basic residues.

It belongs to the TRAFAC class OBG-HflX-like GTPase superfamily. OBG GTPase family. Monomer. It depends on Mg(2+) as a cofactor.

The protein resides in the cytoplasm. An essential GTPase which binds GTP, GDP and possibly (p)ppGpp with moderate affinity, with high nucleotide exchange rates and a fairly low GTP hydrolysis rate. Plays a role in control of the cell cycle, stress response, ribosome biogenesis and in those bacteria that undergo differentiation, in morphogenesis control. The sequence is that of GTPase Obg from Mycobacterium tuberculosis (strain ATCC 25177 / H37Ra).